Consider the following 138-residue polypeptide: Large ribosomal subunit protein uL16 (138 aa).

The protein belongs to the universal ribosomal protein uL16 family. Part of the 50S ribosomal subunit.

Functionally, binds 23S rRNA and is also seen to make contacts with the A and possibly P site tRNAs. The protein is Large ribosomal subunit protein uL16 of Gluconobacter oxydans (strain 621H) (Gluconobacter suboxydans).